The following is a 540-amino-acid chain: Extracellular matrix protein 1 (540 aa).

Residues 1–19 (MGTTARAALVLTYLAVASA) form the signal peptide. Disordered stretches follow at residues 41 to 85 (VGYA…EATP) and 120 to 175 (LQHP…PSPD). Polar residues-rich tracts occupy residues 71-85 (GQSQ…EATP) and 146-156 (NAAQHCQQDRS). 2 repeat units span residues 150–279 (HCQQ…QPHY) and 283–405 (ACPS…YPNY). Residues 150–405 (HCQQDRSQGG…FARRAPYPNY (256 aa)) are 2 X approximate repeats. An N-linked (GlcNAc...) asparagine glycan is attached at asparagine 354. An N-linked (GlcNAc...) (complex) asparagine glycan is attached at asparagine 444. The disordered stretch occupies residues 515-540 (ENAKGQGEQGSTGGTNISSTSEPKEE). Low complexity predominate over residues 528-540 (GTNISSTSEPKEE). Asparagine 530 carries an N-linked (GlcNAc...) asparagine glycan.

In terms of assembly, interacts (via C-terminus) with HSPG2 (via C-terminus). Interacts with EFEMP1/FBLN3 and LAMB3. Interacts with MMP9. In terms of tissue distribution, expressed in breast cancer tissues. Little or no expression observed in normal breast tissues. Expressed in skin; wide expression is observed throughout the dermis with minimal expression in the epidermis.

Its subcellular location is the secreted. The protein localises to the extracellular space. It is found in the extracellular matrix. Functionally, involved in endochondral bone formation as negative regulator of bone mineralization. Stimulates the proliferation of endothelial cells and promotes angiogenesis. Inhibits MMP9 proteolytic activity. The chain is Extracellular matrix protein 1 (ECM1) from Homo sapiens (Human).